The primary structure comprises 708 residues: KIIVNRLARKVEVDSIVVPLPFSSQELSIEDSGSMYVITTPAGLIIKWSHLTGIIDIHFGFRFNLSSYTEGLCGICNEDPDDDLRMQNGTIITNMEDIGLFIESWEIEKSFEVTMRRPVRNCTEHDCSQCIDLLNRRIFIPCHDKVSPEDFCEKMWINYTYFWNYECDALSAYVALCNKFDICIQWRTPDYCSLSCPEGKEYQPCVRPCEARTCLNQWFYGHSSCLNLREDCACKDGTILHRPHSTQCIPEKECACTDSEDQPRTAGEIWNGGIDECALYKCLENGSVIPIEPDCDEEPTPVCEREAEVVMGIIDKWTCCSKEVCGCDATLCEPTIPTCTNGEKLIVGHSPLSCCPQYKCECDPLKCPSISTPECREDQFMIQVQQEEPCCFSPFCVCESCTKPVPLCHDGEFLTVDLNSTHFCCPQYYCVCEPNLCPMPLLNCAEDMNLVKENVFGQCCPTWHCEKDDVCVFQEVSVLNPGQSMIKYLEEDFCYTIECLEEKDNHTGFHTLNFTLVNCSKKCDVHQVYTPSPSDYDCCGTCKNVSCKFHMENGTSVVYVVGSTWHYNCTTYECVKTDEGAIILNYTMVCPPFNETECKMNEGIVKLYNEGCCKICKREERICQKVIIKSVIRKQDCMSQSLINVASCDGKCPSATIYNINIGSHLRFCKCCRENGVRNLSVPLYCSGNGTEIMYTLQEPIDCTCQWN.

The VWFD domain maps to K1–V113. N553 carries N-linked (GlcNAc...) asparagine glycosylation. Intrachain disulfides connect C616–C672, C637–C686, C648–C703, and C652–C705. Residues C616 to N708 form the CTCK domain.

Belongs to the otogelin family.

It localises to the secreted. This chain is Otogelin-like protein (OTOGL), found in Pongo abelii (Sumatran orangutan).